The chain runs to 187 residues: Elongation factor P (187 aa).

The protein belongs to the elongation factor P family.

Its subcellular location is the cytoplasm. The protein operates within protein biosynthesis; polypeptide chain elongation. Functionally, involved in peptide bond synthesis. Stimulates efficient translation and peptide-bond synthesis on native or reconstituted 70S ribosomes in vitro. Probably functions indirectly by altering the affinity of the ribosome for aminoacyl-tRNA, thus increasing their reactivity as acceptors for peptidyl transferase. This is Elongation factor P from Mycobacterium marinum (strain ATCC BAA-535 / M).